The chain runs to 58 residues: Temporin-1Th (58 aa).

The N-terminal stretch at 1–22 is a signal peptide; sequence MFTLKKSLLLLFFLGTINLSLC. Residues 23–46 constitute a propeptide that is removed on maturation; it reads EEERNAEEERRDEPDERDVQVEKR. The tract at residues 25-46 is disordered; that stretch reads ERNAEEERRDEPDERDVQVEKR. Leucine amide is present on Leu-56.

As to expression, expressed by the skin glands.

Its subcellular location is the secreted. Functionally, antimicrobial peptide that renders both the outer and inner membrane of bacteria permeable to hydrophobic substances of low molecular mass. The polypeptide is Temporin-1Th (Rana temporaria (European common frog)).